A 473-amino-acid chain; its full sequence is Photosystem II CP43 reaction center protein (473 aa).

Positions 1–14 (MKTLYSLRRYFHVE) are excised as a propeptide. Position 15 is an N-acetylthreonine (Thr15). Thr15 carries the phosphothreonine modification. The next 5 membrane-spanning stretches (helical) occupy residues 69 to 93 (LFEV…PHLA), 134 to 155 (LIGP…KDKN), 178 to 200 (KAMY…RVIS), 255 to 275 (KPFA…LSYS), and 291 to 312 (WFNN…ASQA). Glu367 contributes to the [CaMn4O5] cluster binding site. Residues 447–471 (RARAAAAGFEKGIDRDTEPVLSMRP) form a helical membrane-spanning segment.

Belongs to the PsbB/PsbC family. PsbC subfamily. PSII is composed of 1 copy each of membrane proteins PsbA, PsbB, PsbC, PsbD, PsbE, PsbF, PsbH, PsbI, PsbJ, PsbK, PsbL, PsbM, PsbT, PsbX, PsbY, PsbZ, Psb30/Ycf12, at least 3 peripheral proteins of the oxygen-evolving complex and a large number of cofactors. It forms dimeric complexes. The cofactor is Binds multiple chlorophylls and provides some of the ligands for the Ca-4Mn-5O cluster of the oxygen-evolving complex. It may also provide a ligand for a Cl- that is required for oxygen evolution. PSII binds additional chlorophylls, carotenoids and specific lipids..

Its subcellular location is the plastid. It is found in the chloroplast thylakoid membrane. Functionally, one of the components of the core complex of photosystem II (PSII). It binds chlorophyll and helps catalyze the primary light-induced photochemical processes of PSII. PSII is a light-driven water:plastoquinone oxidoreductase, using light energy to abstract electrons from H(2)O, generating O(2) and a proton gradient subsequently used for ATP formation. This is Photosystem II CP43 reaction center protein from Ostreococcus tauri.